The sequence spans 249 residues: MPIRYISQKLAQQIDVELMSASGAFSLDQLMELAGLSCAQALAKSFPPTKHKHVMVACGPGNQGGDGLVAARHLHHFSYTPTVYLPKPSSKDFLQRLVKQCENLNIPILKDVDAFQTELAKSDVILDAIFGFSFQPPLRKPFDQVLKAIKGVSKKIPIVSVDIPSGWSVTDGPQPLWTEEDDKGGKEMIETFEPEVLVSLTAPKEGVKAFKGQHWLGGRFVPDELGKKHELNIPPYEGIDQVVELPRNH.

A YjeF N-terminal domain is found at 11–233; it reads AQQIDVELMS…ELGKKHELNI (223 aa). Residue 62–66 coordinates (6S)-NADPHX; that stretch reads NQGGD. K(+) contacts are provided by Gln-63 and Asp-127. (6S)-NADPHX-binding positions include 131–137 and Asp-162; that span reads GFSFQPP. Ser-165 is a K(+) binding site.

Belongs to the NnrE/AIBP family. It depends on K(+) as a cofactor.

It localises to the cytoplasm. The protein resides in the mitochondrion. It carries out the reaction (6R)-NADHX = (6S)-NADHX. The enzyme catalyses (6R)-NADPHX = (6S)-NADPHX. In terms of biological role, catalyzes the epimerization of the S- and R-forms of NAD(P)HX, a damaged form of NAD(P)H that is a result of enzymatic or heat-dependent hydration. This is a prerequisite for the S-specific NAD(P)H-hydrate dehydratase to allow the repair of both epimers of NAD(P)HX. The protein is NAD(P)H-hydrate epimerase of Cryptococcus neoformans var. neoformans serotype D (strain JEC21 / ATCC MYA-565) (Filobasidiella neoformans).